We begin with the raw amino-acid sequence, 441 residues long: MAPNQRSRSLLQRHRGKVLISLTGIAALFTTGSVVVFFVKRWLYKQQLRITEQHFIKEQIKRRFEQTQEDSLYTIYELLPVWRMVLNENDLNLDSIVTQLKDQKNQLTRAKSSESRESSPLKSKAELWNELELKSLIKLVTVTYTVSSLILLTRLQLNILTRNEYLDSAIKLTMQQENCNKLQNRFYNWVTSWWSDPEDKADDAMVMAAKKSKKEGQEVYINEQAFLSLSWWILNKGWLSYNEIITNQIEIEFDGIHPRDTLTLEEFSSRLTNIFRNTNSQIFQQNNNNLTSILLPKDSSGQEFLLSQTLDADALTSFHSNTLVFNQLVNELTQCIESTATSIVLESLINESFHFIMNKVGIKTIAKKKPGQEDQQQYQMAVFAMSMKDCCQEMLQTTAGSSHSGSVNEYLATLDSVQPLDDLSASVYSNFGVSSSFSFKP.

Topologically, residues 1–17 (MAPNQRSRSLLQRHRGK) are peroxisomal. A helical membrane pass occupies residues 18–39 (VLISLTGIAALFTTGSVVVFFV). The Cytoplasmic segment spans residues 40–441 (KRWLYKQQLR…GVSSSFSFKP (402 aa)).

It belongs to the peroxin-3 family. As to quaternary structure, interacts with MSP1; leading to inhibit the translocase activity of MSP1.

Its subcellular location is the peroxisome membrane. In terms of biological role, involved in peroxisome biosynthesis. Acts as a regulator of MSP1 by inhibiting the ability of MSP1 to unfold target proteins. This chain is Peroxisomal biogenesis factor 3 (PEX3), found in Saccharomyces cerevisiae (strain ATCC 204508 / S288c) (Baker's yeast).